Consider the following 24-residue polypeptide: Ascaphin-2 (24 aa).

As to expression, expressed by the skin glands.

Its subcellular location is the secreted. In terms of biological role, antimicrobial peptide that shows higher potency against Gram-negative bacteria than against Gram-positive bacteria. Has a very week hemolytic activity. This chain is Ascaphin-2, found in Ascaphus truei (Coastal tailed frog).